We begin with the raw amino-acid sequence, 367 residues long: MKEGEKMKPYEHGGNIYDYQGNLIDFSSNINPLGPPEWIWEAIKEVDLSRYPDIKYRRLKEAIAEYVGCDRENIIVGNGAAELIHLFARAFKLKKPLIPSPSFLEYERAVKLNGGEPVYLKLEEEEGFRVNFAKVISKIEEADGLILGNPNNPTGQGIIREEIGILLKKAELMNIPVLIDEAFIEFMKDYKKYEALPLVKKHDKLFVVRAVTKFFGMPGIRLGYGIGSPSLIQKLEEYKEPWTVNAFAEAVGRWLFKDREYIEKTREYVNAEIEHMLFSLRTIDYLVAFDTKVNFILLKLKAGTVDEVKEKLLKKGILIRDASNFRYLDKRFFRVAVKRREDNMCLIEALRGLYEEGVMPDKERVVV.

Residues 12–13, asparagine 29, and asparagine 152 contribute to the O-phospho-L-threonine site; that span reads HG. Lysine 213 carries the post-translational modification N6-(pyridoxal phosphate)lysine. Residues arginine 320 and arginine 334 each contribute to the O-phospho-L-threonine site.

This sequence belongs to the class-II pyridoxal-phosphate-dependent aminotransferase family. Requires pyridoxal 5'-phosphate as cofactor.

It carries out the reaction O-phospho-L-threonine + H(+) = (R)-1-aminopropan-2-yl phosphate + CO2. Its pathway is cofactor biosynthesis; adenosylcobalamin biosynthesis. Decarboxylates L-threonine-O-3-phosphate to yield (R)-1-amino-2-propanol O-2-phosphate, the precursor for the linkage between the nucleotide loop and the corrin ring in cobalamin. This chain is Putative threonine-phosphate decarboxylase (cobD), found in Caldanaerobacter subterraneus subsp. tengcongensis (strain DSM 15242 / JCM 11007 / NBRC 100824 / MB4) (Thermoanaerobacter tengcongensis).